Here is a 359-residue protein sequence, read N- to C-terminus: 4-hydroxy-tetrahydrodipicolinate synthase, chloroplastic (359 aa).

The N-terminal 33 residues, M1 to A33, are a transit peptide targeting the chloroplast. T102 lines the pyruvate pocket. Y188 acts as the Proton donor/acceptor in catalysis. K216 functions as the Schiff-base intermediate with substrate in the catalytic mechanism. Residue I255 coordinates pyruvate.

The protein belongs to the DapA family.

It is found in the plastid. The protein localises to the chloroplast. It carries out the reaction L-aspartate 4-semialdehyde + pyruvate = (2S,4S)-4-hydroxy-2,3,4,5-tetrahydrodipicolinate + H2O + H(+). It functions in the pathway amino-acid biosynthesis; L-lysine biosynthesis via DAP pathway; (S)-tetrahydrodipicolinate from L-aspartate: step 3/4. In terms of biological role, catalyzes the condensation of (S)-aspartate-beta-semialdehyde [(S)-ASA] and pyruvate to 4-hydroxy-tetrahydrodipicolinate (HTPA). This chain is 4-hydroxy-tetrahydrodipicolinate synthase, chloroplastic (DHPS1), found in Nicotiana tabacum (Common tobacco).